The following is a 226-amino-acid chain: tRNA (guanine-N(7)-)-methyltransferase (226 aa).

Residues Glu59, Glu84, Asp111, and Asp134 each contribute to the S-adenosyl-L-methionine site. Residue Asp134 is part of the active site. Position 138 (Lys138) interacts with substrate. An interaction with RNA region spans residues 140–145 (RHNKRR). Residues Asp170 and 205 to 208 (TKFE) contribute to the substrate site.

This sequence belongs to the class I-like SAM-binding methyltransferase superfamily. TrmB family.

The catalysed reaction is guanosine(46) in tRNA + S-adenosyl-L-methionine = N(7)-methylguanosine(46) in tRNA + S-adenosyl-L-homocysteine. Its pathway is tRNA modification; N(7)-methylguanine-tRNA biosynthesis. Functionally, catalyzes the formation of N(7)-methylguanine at position 46 (m7G46) in tRNA. This is tRNA (guanine-N(7)-)-methyltransferase from Chromobacterium violaceum (strain ATCC 12472 / DSM 30191 / JCM 1249 / CCUG 213 / NBRC 12614 / NCIMB 9131 / NCTC 9757 / MK).